Reading from the N-terminus, the 215-residue chain is Probable phosphoglycerate mutase GpmB (215 aa).

Substrate-binding positions include 8 to 15 (RHGETQWN), 21 to 22 (QG), Arg58, Arg60, 82 to 85 (ELDM), 104 to 105 (RR), and 151 to 152 (GI). His9 acts as the Tele-phosphohistidine intermediate in catalysis. The active-site Proton donor/acceptor is Glu82.

Belongs to the phosphoglycerate mutase family. GpmB subfamily.

It carries out the reaction (2R)-2-phosphoglycerate = (2R)-3-phosphoglycerate. Its pathway is carbohydrate degradation; glycolysis; pyruvate from D-glyceraldehyde 3-phosphate: step 3/5. The polypeptide is Probable phosphoglycerate mutase GpmB (Citrobacter koseri (strain ATCC BAA-895 / CDC 4225-83 / SGSC4696)).